The following is a 216-amino-acid chain: MTTKQIKGVLGEKLGMTQVFDESGKVVPVTVLKAGPAVVTRVRTPETDGYSAIQLGYGHINPRKVNKPLGDYLRKHNLTPRRHYVEVRTSDASEYTVGQEITADVFQPGEKVDVTGKTKGKGYAGVMKRHGFGGLGASHGTQRKHRSPGSIGGCATPGRVFKGMRMAGRMGNVRRTVQNLTVHSVDAEKGLLLVKGAVPGPNGGLVLVRTAVKGGK.

Residues 135 to 156 (LGASHGTQRKHRSPGSIGGCAT) are disordered.

The protein belongs to the universal ribosomal protein uL3 family. In terms of assembly, part of the 50S ribosomal subunit. Forms a cluster with proteins L14 and L19.

Functionally, one of the primary rRNA binding proteins, it binds directly near the 3'-end of the 23S rRNA, where it nucleates assembly of the 50S subunit. The polypeptide is Large ribosomal subunit protein uL3 (Thermobifida fusca (strain YX)).